Reading from the N-terminus, the 58-residue chain is Small ribosomal subunit protein bS21 (58 aa).

The disordered stretch occupies residues 37 to 58 (FYEKPSVKRKKKSEAARKRKKF). Basic residues predominate over residues 43–58 (VKRKKKSEAARKRKKF).

This sequence belongs to the bacterial ribosomal protein bS21 family.

The protein is Small ribosomal subunit protein bS21 of Enterococcus faecalis (strain ATCC 700802 / V583).